The primary structure comprises 525 residues: Mitogen-activated protein kinase kinase 5 (525 aa).

Residues 59 to 317 form the Protein kinase domain; that stretch reads ETEGGFLGKG…CTELLRHPFI (259 aa). ATP contacts are provided by residues 65–73 and K88; that span reads LGKGSSGSV. The active-site Proton acceptor is the D178. The span at 358–367 shows a compositional bias: low complexity; the sequence is SALPLASEGG. Disordered stretches follow at residues 358–392 and 438–468; these read SALPLASEGGTPKATSPSPAPVSPLTLSCPLERHD and SASVATDSGEGGGAAGVSAASLDNGQAAQHR.

Belongs to the protein kinase superfamily. STE Ser/Thr protein kinase family. MAP kinase kinase subfamily. Mg(2+) is required as a cofactor.

The enzyme catalyses L-tyrosyl-[protein] + ATP = O-phospho-L-tyrosyl-[protein] + ADP + H(+). It carries out the reaction L-seryl-[protein] + ATP = O-phospho-L-seryl-[protein] + ADP + H(+). It catalyses the reaction L-threonyl-[protein] + ATP = O-phospho-L-threonyl-[protein] + ADP + H(+). Its function is as follows. Protein kinase which phosphorylates and activates MPK4 in vitro. The sequence is that of Mitogen-activated protein kinase kinase 5 from Leishmania mexicana.